A 493-amino-acid chain; its full sequence is MDTAQPAMTAPPAQAAADEPVGRVTAVRGAVIDVAFDTGALPMIEDALVITTDDGQPIIAEVQAHLDEGTVRALALRSTNGLRRGAPVRAAGGPIEVPVGEAMLGRLIDVSGVPGDNGTPLPPGTPRRPIHRKPPPLASQGAETRIFATGIKVIDLLTPLAQGGKAAMFGGAGVGKTVLVMELIHAMVERYQGISVFAGVGERCREGHEMLTDMRHSGVLPRTVLVYGQMNEPPGARWRVPLTALTVAEYFRDERHQNVLLLMDNVFRFVQAGAEVSGLLGRLPSRVGYQPTLATEVAGLQERIVSVGDVSVTAIEAVYVPADDFTDPAVTAIAAHVDSMVVLSRSMAAEGMYPAIDPIASSSVLLDPLVVGGEHARIAIEVRRAVEHYRELQDVISLLGVEELGADDRRIVGRARRLQRFLTQPFAVTEAFTGVPGRSVPVADTLAGCKAILDGNCDDWQESSLYMVGTLDEAREREQATRNAKPVSEHAEP.

Positions 113–138 (VPGDNGTPLPPGTPRRPIHRKPPPLA) are disordered. 170–177 (GGAGVGKT) lines the ATP pocket.

It belongs to the ATPase alpha/beta chains family. As to quaternary structure, F-type ATPases have 2 components, CF(1) - the catalytic core - and CF(0) - the membrane proton channel. CF(1) has five subunits: alpha(3), beta(3), gamma(1), delta(1), epsilon(1). CF(0) has three main subunits: a(1), b(2) and c(9-12). The alpha and beta chains form an alternating ring which encloses part of the gamma chain. CF(1) is attached to CF(0) by a central stalk formed by the gamma and epsilon chains, while a peripheral stalk is formed by the delta and b chains.

The protein localises to the cell inner membrane. It catalyses the reaction ATP + H2O + 4 H(+)(in) = ADP + phosphate + 5 H(+)(out). Its function is as follows. Produces ATP from ADP in the presence of a proton gradient across the membrane. The catalytic sites are hosted primarily by the beta subunits. This chain is ATP synthase subunit beta 3, found in Paraburkholderia xenovorans (strain LB400).